Consider the following 300-residue polypeptide: tRNA dimethylallyltransferase (300 aa).

An ATP-binding site is contributed by 9–16 (GPTASGKS). Substrate is bound at residue 11–16 (TASGKS). Residues 34-37 (DSKQ) form an interaction with substrate tRNA region.

Belongs to the IPP transferase family. As to quaternary structure, monomer. The cofactor is Mg(2+).

The enzyme catalyses adenosine(37) in tRNA + dimethylallyl diphosphate = N(6)-dimethylallyladenosine(37) in tRNA + diphosphate. In terms of biological role, catalyzes the transfer of a dimethylallyl group onto the adenine at position 37 in tRNAs that read codons beginning with uridine, leading to the formation of N6-(dimethylallyl)adenosine (i(6)A). This is tRNA dimethylallyltransferase from Ehrlichia ruminantium (strain Welgevonden).